The primary structure comprises 143 residues: Putative complexin-1 (143 aa).

Positions 15–71 are disordered; sequence NEVTGGLGLKDDGGEKTETGEDPEVVAARLEQEERRKEKHRKMEQEREKMRQGIRDK. 2 stretches are compositionally biased toward basic and acidic residues: residues 23–33 and 44–71; these read LKDDGGEKTET and LEQEERRKEKHRKMEQEREKMRQGIRDK. Residues 40-71 adopt a coiled-coil conformation; sequence VAARLEQEERRKEKHRKMEQEREKMRQGIRDK.

It belongs to the complexin/synaphin family.

Its subcellular location is the cytoplasm. The protein resides in the cytosol. Positively regulates a late step in synaptic vesicle exocytosis. This is Putative complexin-1 (cpx-1) from Caenorhabditis briggsae.